A 351-amino-acid chain; its full sequence is MPSLRAHVFRVPADGPDDVAGVEALFASGLQANNIVAVLGKTEGNGCVNDFTRGYATRSFETLFSRYGVDGVSIIMSGGTEGALSPHWTVFARETVETPGERALAIGVSRTPALSPEHLGRREQILLVAEGVKSAMRDAGIDDPADAHFVQIKCPLLTSRRIAEAEAAGRTVATHDTLKSMGLSRGASALGVAVALGEIDATSINDADICTRFDLFSRCASTSSGVELTDHEIIVLGMSAKWSGPLSIDHAVMRDAIDAHSVRKARERLPENSRLAAVLAKAEPDPSGEIDGRRHTMLDDSDIAGTRHARAFVGGVLAGIFGITDLYVSGGAEHQGPPGGGPVAIIVEKEQ.

Residues Met1 to Val96 form an RU A region. Substrate contacts are provided by residues Arg53 and Ser77–Gly78. The tract at residues Ala103–Ala240 is RU B. The active site involves Lys153. Substrate is bound by residues Arg185 and Ser223–Ser224. The active-site Nucleophile is Ser223. The tract at residues Leu246–Gln351 is RU C. Glu283 contributes to the Mg(2+) binding site. Substrate-binding positions include Arg310 and Ser329–Gly330. Mg(2+) contacts are provided by Ala332, Gln335, Gly336, Pro337, and Gly340.

It belongs to the cyclic amide hydrolase (CyAH) family. Homotetramer.

The enzyme catalyses cyanurate + H2O = 1-carboxybiuret + H(+). It participates in xenobiotic degradation; atrazine degradation; biuret from cyanurate: step 1/1. With respect to regulation, inhibited by barbituric acid. In terms of biological role, responsible for the hydrolysis of cyanuric acid, an intermediate formed during catabolism of s-triazine based compounds in herbicides such as atrazine and polymers such as melamine. Catalyzes the hydrolytic opening of the s-triazine ring of cyanuric acid (2,4,6-trihydroxy-s-triazine) to yield carbon dioxide and carboxybiuret, which spontaneously decarboxylates to biuret. This chain is Cyanuric acid amidohydrolase, found in Rhizobium johnstonii (strain DSM 114642 / LMG 32736 / 3841) (Rhizobium leguminosarum bv. viciae).